A 308-amino-acid polypeptide reads, in one-letter code: Homoserine O-succinyltransferase (308 aa).

Cysteine 142 serves as the catalytic Acyl-thioester intermediate. 2 residues coordinate substrate: lysine 163 and serine 192. Catalysis depends on histidine 235, which acts as the Proton acceptor. Glutamate 237 is a catalytic residue. Arginine 249 contributes to the substrate binding site.

Belongs to the MetA family.

The protein localises to the cytoplasm. It catalyses the reaction L-homoserine + succinyl-CoA = O-succinyl-L-homoserine + CoA. It functions in the pathway amino-acid biosynthesis; L-methionine biosynthesis via de novo pathway; O-succinyl-L-homoserine from L-homoserine: step 1/1. Its function is as follows. Transfers a succinyl group from succinyl-CoA to L-homoserine, forming succinyl-L-homoserine. This Pseudoalteromonas atlantica (strain T6c / ATCC BAA-1087) protein is Homoserine O-succinyltransferase.